The primary structure comprises 362 residues: 4-hydroxy-3-methylbut-2-en-1-yl diphosphate synthase (flavodoxin) (362 aa).

Positions 266, 269, 301, and 308 each coordinate [4Fe-4S] cluster.

This sequence belongs to the IspG family. [4Fe-4S] cluster is required as a cofactor.

It carries out the reaction (2E)-4-hydroxy-3-methylbut-2-enyl diphosphate + oxidized [flavodoxin] + H2O + 2 H(+) = 2-C-methyl-D-erythritol 2,4-cyclic diphosphate + reduced [flavodoxin]. The protein operates within isoprenoid biosynthesis; isopentenyl diphosphate biosynthesis via DXP pathway; isopentenyl diphosphate from 1-deoxy-D-xylulose 5-phosphate: step 5/6. Its function is as follows. Converts 2C-methyl-D-erythritol 2,4-cyclodiphosphate (ME-2,4cPP) into 1-hydroxy-2-methyl-2-(E)-butenyl 4-diphosphate. This is 4-hydroxy-3-methylbut-2-en-1-yl diphosphate synthase (flavodoxin) from Malacoplasma penetrans (strain HF-2) (Mycoplasma penetrans).